The primary structure comprises 596 residues: Probable protein S-acyltransferase 22 (596 aa).

A run of 2 helical transmembrane segments spans residues 15 to 35 and 44 to 64; these read VVAVAVFLALGFAFYVFFAPF and IAMGIYTPLITCVVGLYIWCA. Residues 102-125 form a disordered region; that stretch reads TGGAKSHDGTCVEDTENGSNKKLE. The region spanning 163 to 213 is the DHHC domain; sequence FYCSLCEVEVFKYSKHCRVCDKCVDRFDHHCRWLNNCIGKRNYRKFFSLMV. Residue Cys193 is the S-palmitoyl cysteine intermediate of the active site. A run of 2 helical transmembrane segments spans residues 215–235 and 254–274; these read AIFLLIMQWSTGIFVLVLCLL and LIPFVIVVGVCTVLAMLATLP. Disordered stretches follow at residues 433 to 455, 498 to 523, and 549 to 596; these read SGRRMFPTKYEGVNNNGKQRRQS, QTSRAMSGSGNVMVTSSPESSLDSHD, and MGQQ…HKSR. Positions 498 to 518 are enriched in polar residues; it reads QTSRAMSGSGNVMVTSSPESS. Over residues 549–571 the composition is skewed to low complexity; it reads MGQQRGQQQQQQLSMMMMPLSRS.

This sequence belongs to the DHHC palmitoyltransferase family.

The protein localises to the cell membrane. Its subcellular location is the cytoplasmic vesicle membrane. The enzyme catalyses L-cysteinyl-[protein] + hexadecanoyl-CoA = S-hexadecanoyl-L-cysteinyl-[protein] + CoA. Palmitoyl acyltransferase. This Arabidopsis thaliana (Mouse-ear cress) protein is Probable protein S-acyltransferase 22 (PAT22).